Consider the following 384-residue polypeptide: 8-amino-7-oxononanoate synthase (384 aa).

Position 21 (Arg21) interacts with substrate. 108–109 (GF) is a pyridoxal 5'-phosphate binding site. His133 serves as a coordination point for substrate. The pyridoxal 5'-phosphate site is built by Ser179, His207, and Thr233. At Lys236 the chain carries N6-(pyridoxal phosphate)lysine. Thr352 provides a ligand contact to substrate.

Belongs to the class-II pyridoxal-phosphate-dependent aminotransferase family. BioF subfamily. In terms of assembly, homodimer. The cofactor is pyridoxal 5'-phosphate.

The catalysed reaction is 6-carboxyhexanoyl-[ACP] + L-alanine + H(+) = (8S)-8-amino-7-oxononanoate + holo-[ACP] + CO2. The protein operates within cofactor biosynthesis; biotin biosynthesis. Functionally, catalyzes the decarboxylative condensation of pimeloyl-[acyl-carrier protein] and L-alanine to produce 8-amino-7-oxononanoate (AON), [acyl-carrier protein], and carbon dioxide. The sequence is that of 8-amino-7-oxononanoate synthase from Escherichia coli (strain SE11).